A 221-amino-acid chain; its full sequence is Phosphoribosylformylglycinamidine synthase subunit PurQ (221 aa).

A Glutamine amidotransferase type-1 domain is found at 2 to 221 (NVGVIVFPGS…FAGLLEPVAA (220 aa)). Cys86 acts as the Nucleophile in catalysis. Catalysis depends on residues His194 and Glu196.

As to quaternary structure, part of the FGAM synthase complex composed of 1 PurL, 1 PurQ and 2 PurS subunits.

The protein localises to the cytoplasm. It carries out the reaction N(2)-formyl-N(1)-(5-phospho-beta-D-ribosyl)glycinamide + L-glutamine + ATP + H2O = 2-formamido-N(1)-(5-O-phospho-beta-D-ribosyl)acetamidine + L-glutamate + ADP + phosphate + H(+). The enzyme catalyses L-glutamine + H2O = L-glutamate + NH4(+). It functions in the pathway purine metabolism; IMP biosynthesis via de novo pathway; 5-amino-1-(5-phospho-D-ribosyl)imidazole from N(2)-formyl-N(1)-(5-phospho-D-ribosyl)glycinamide: step 1/2. Part of the phosphoribosylformylglycinamidine synthase complex involved in the purines biosynthetic pathway. Catalyzes the ATP-dependent conversion of formylglycinamide ribonucleotide (FGAR) and glutamine to yield formylglycinamidine ribonucleotide (FGAM) and glutamate. The FGAM synthase complex is composed of three subunits. PurQ produces an ammonia molecule by converting glutamine to glutamate. PurL transfers the ammonia molecule to FGAR to form FGAM in an ATP-dependent manner. PurS interacts with PurQ and PurL and is thought to assist in the transfer of the ammonia molecule from PurQ to PurL. In Synechococcus sp. (strain ATCC 27144 / PCC 6301 / SAUG 1402/1) (Anacystis nidulans), this protein is Phosphoribosylformylglycinamidine synthase subunit PurQ.